The following is a 277-amino-acid chain: MTRIKAACLIGWPAAHSRSPMIHHYWLRTLGIEGGYAIESVPPEGFGEFVLHLSTHGYLGANVTIPHKERALLLTEPDARARAVGAANTLWYDGETLRSTNTDIEGFLNNLDACAPGWDGIDEALVLGAGGSSRAVVFGLIERGIKRIHLANRTLDRAQAVADQFNADVVPTAWQDLAAVLPRAKLLVNTTSLGMKGQPALEVDIGLLPTDAAVADLVYVPLETPLLAAARARGLATADGLGMLLHQAVRGFELWFGTRPSVTPELRALIEADLAPA.

Shikimate is bound by residues 17 to 19 and Thr-64; that span reads SRS. The Proton acceptor role is filled by Lys-68. Shikimate contacts are provided by Asn-88 and Asp-103. Residues 128 to 132, 152 to 157, and Leu-217 each bind NADP(+); these read GAGGS and NRTLDR. Tyr-219 contacts shikimate. Gly-240 is a binding site for NADP(+).

It belongs to the shikimate dehydrogenase family. Homodimer.

The catalysed reaction is shikimate + NADP(+) = 3-dehydroshikimate + NADPH + H(+). The protein operates within metabolic intermediate biosynthesis; chorismate biosynthesis; chorismate from D-erythrose 4-phosphate and phosphoenolpyruvate: step 4/7. In terms of biological role, involved in the biosynthesis of the chorismate, which leads to the biosynthesis of aromatic amino acids. Catalyzes the reversible NADPH linked reduction of 3-dehydroshikimate (DHSA) to yield shikimate (SA). This chain is Shikimate dehydrogenase (NADP(+)), found in Rhodopseudomonas palustris (strain BisB18).